We begin with the raw amino-acid sequence, 391 residues long: Putative protein PLEKHA9 (391 aa).

The polypeptide is Putative protein PLEKHA9 (PLEKHA8P1) (Homo sapiens (Human)).